The chain runs to 201 residues: Small ribosomal subunit protein uS4 (201 aa).

Residues 28–47 are disordered; that stretch reads KKNYPPGQHGNSRKRKTSEY. An S4 RNA-binding domain is found at 92–155; sequence GRLDNIVFRL…KSLEVIANSL (64 aa).

Belongs to the universal ribosomal protein uS4 family. As to quaternary structure, part of the 30S ribosomal subunit. Contacts protein S5. The interaction surface between S4 and S5 is involved in control of translational fidelity.

Its function is as follows. One of the primary rRNA binding proteins, it binds directly to 16S rRNA where it nucleates assembly of the body of the 30S subunit. In terms of biological role, with S5 and S12 plays an important role in translational accuracy. This chain is Small ribosomal subunit protein uS4, found in Bacteroides fragilis (strain YCH46).